The primary structure comprises 333 residues: Phosphate acyltransferase (333 aa).

This sequence belongs to the PlsX family. As to quaternary structure, homodimer. Probably interacts with PlsY.

It is found in the cytoplasm. It catalyses the reaction a fatty acyl-[ACP] + phosphate = an acyl phosphate + holo-[ACP]. It participates in lipid metabolism; phospholipid metabolism. Functionally, catalyzes the reversible formation of acyl-phosphate (acyl-PO(4)) from acyl-[acyl-carrier-protein] (acyl-ACP). This enzyme utilizes acyl-ACP as fatty acyl donor, but not acyl-CoA. The polypeptide is Phosphate acyltransferase (Lactobacillus gasseri (strain ATCC 33323 / DSM 20243 / BCRC 14619 / CIP 102991 / JCM 1131 / KCTC 3163 / NCIMB 11718 / NCTC 13722 / AM63)).